Reading from the N-terminus, the 1939-residue chain is Myosin-1 (1939 aa).

One can recognise a Myosin N-terminal SH3-like domain in the interval Asp33–Pro82. 2 positions are modified to phosphothreonine: Thr64 and Thr69. A Myosin motor domain is found at Asp86–Asp782. The residue at position 130 (Lys130) is an N6,N6,N6-trimethyllysine. ATP is bound at residue Gly179 to Thr186. Phosphotyrosine is present on Tyr389. Position 419 is a phosphothreonine (Thr419). Position 424 is a phosphotyrosine (Tyr424). The interval Leu659–Glu681 is actin-binding. The residue at position 757 (His757) is a Pros-methylhistidine. An actin-binding region spans residues Lys761–Gly775. Residues Leu785 to Ser814 form the IQ domain. Positions Leu843–Glu1939 form a coiled coil. Phosphoserine is present on residues Ser1092 and Ser1096. Disordered regions lie at residues Glu1125–Leu1147 and Arg1153–Glu1172. The segment covering Ala1128–Leu1147 has biased composition (basic and acidic residues). Phosphoserine occurs at positions 1162 and 1237. Position 1241 is a phosphothreonine (Thr1241). Ser1243 bears the Phosphoserine mark. Thr1255 carries the phosphothreonine modification. Phosphoserine is present on Ser1261. A phosphothreonine mark is found at Thr1265 and Thr1286. Phosphoserine is present on residues Ser1288, Ser1292, Ser1303, and Ser1306. Residue Tyr1464 is modified to Phosphotyrosine. Position 1467 is a phosphothreonine (Thr1467). At Ser1474 the chain carries Phosphoserine. Phosphotyrosine is present on Tyr1492. Residue Ser1495 is modified to Phosphoserine. The residue at position 1501 (Thr1501) is a Phosphothreonine. Residue Ser1514 is modified to Phosphoserine. Position 1517 is a phosphothreonine (Thr1517). 7 positions are modified to phosphoserine: Ser1542, Ser1554, Ser1574, Ser1600, Ser1603, Ser1714, and Ser1726. A phosphothreonine mark is found at Thr1730 and Thr1736. Ser1739 is subject to Phosphoserine.

This sequence belongs to the TRAFAC class myosin-kinesin ATPase superfamily. Myosin family. In terms of assembly, muscle myosin is a hexameric protein that consists of 2 heavy chain subunits (MHC), 2 alkali light chain subunits (MLC) and 2 regulatory light chain subunits (MLC-2). Interacts with SLC26A5.

The protein resides in the cytoplasm. It is found in the myofibril. Functionally, required for normal hearing. It plays a role in cochlear amplification of auditory stimuli, likely through the positive regulation of prestin (SLC26A5) activity and outer hair cell (OHC) electromotility. The protein is Myosin-1 (MYH1) of Sus scrofa (Pig).